The primary structure comprises 204 residues: Tetraspanin-13 (204 aa).

The Cytoplasmic portion of the chain corresponds to 1 to 19 (MVCGGFACSKNCLCALNLL). The helical transmembrane segment at 20 to 40 (YTLVSLLLIGIAAWGIGFGLI) threads the bilayer. Topologically, residues 41-44 (SSLR) are extracellular. Residues 45-65 (VVGVVIAVGIFLFLIALVGLI) traverse the membrane as a helical segment. The Cytoplasmic portion of the chain corresponds to 66–72 (GAVKHHQ). The helical transmembrane segment at 73-93 (VLLFFYMIILLLVFIVQFSVS) threads the bilayer. Topologically, residues 94–167 (CACLALNQEQ…IGRYAGEVLR (74 aa)) are extracellular. Asparagine 113 and asparagine 137 each carry an N-linked (GlcNAc...) asparagine glycan. Phosphoserine is present on serine 143. The helical transmembrane segment at 168 to 188 (FVGGIGLFFSFTEILGVWLTY) threads the bilayer. Residues 189–204 (RYRNQKDPRANPSAFL) lie on the Cytoplasmic side of the membrane.

This sequence belongs to the tetraspanin (TM4SF) family.

The protein resides in the membrane. The sequence is that of Tetraspanin-13 (TSPAN13) from Bos taurus (Bovine).